Reading from the N-terminus, the 518-residue chain is Calcium and calcium/calmodulin-dependent serine/threonine-protein kinase (518 aa).

The Protein kinase domain occupies 13–300 (YEISEILGRG…AQELLSHPWV (288 aa)). Residues 19–27 (LGRGGFSVV) and lysine 44 each bind ATP. Aspartate 165 functions as the Proton acceptor in the catalytic mechanism. A Phosphothreonine modification is found at threonine 265. The calmodulin-binding stretch occupies residues 323 to 336 (ARRKLRAAAIASVW). Residues 344–365 (TKKLRSLVGTYDLKEEEIESLR) are a coiled coil. 3 consecutive EF-hand domains span residues 394–429 (SLIP…LKNS), 430–465 (KGDD…LPEE), and 472–507 (TEPG…DSSL). Ca(2+) is bound by residues aspartate 407, asparagine 409, aspartate 411, threonine 413, glutamate 418, aspartate 443, aspartate 445, serine 447, cysteine 449, glutamate 454, aspartate 485, asparagine 487, aspartate 489, lysine 491, and glutamate 496.

Belongs to the protein kinase superfamily. CAMK Ser/Thr protein kinase family. CaMK subfamily. In terms of assembly, interacts with IPD3. Interacts with CIP73. In terms of processing, autophosphorylation stimulated by calcium. Occurs probably by an intermolecular mechanism. Mainly expressed in roots and nodules. Detected in leaves, stems and cotyledons.

The protein resides in the nucleus. The enzyme catalyses L-seryl-[protein] + ATP = O-phospho-L-seryl-[protein] + ADP + H(+). The catalysed reaction is L-threonyl-[protein] + ATP = O-phospho-L-threonyl-[protein] + ADP + H(+). With respect to regulation, activated by calcium/calmodulin binding after calcium-induced autophosphorylation. In terms of biological role, calcium- and calmodulin-dependent protein kinase necessary and sufficient for dedifferentiation of root cortical cells into nodule initials. Not required for calcium spiking. Acts as central regulator of the nodule organogenesis program. Required for root hair curling and infection thread (IT) formation upon rhizobial infection, and arbuscule formation during arbuscular mycorrhiza (AM) fungal infection. Phosphorylates the downstream target IPD3, a protein required for root infection by symbiotic rhizobia and AM fungi. Phosphorylates the downstream target CIP73, a protein required for root nodule organogenesis. Mediates the phosphorylation of leghemoglobins (e.g. LB1) to modulate their oxygen O(2) affinity, thus regulating the diffusion of oxygen to the bacteroids in nodules. The polypeptide is Calcium and calcium/calmodulin-dependent serine/threonine-protein kinase (Lotus japonicus (Lotus corniculatus var. japonicus)).